The chain runs to 455 residues: uncharacterized protein (455 aa).

Positions 1–27 are cleaved as a signal peptide; sequence MSQRQQFQFLLSFLILIFLKFIIQIRC. The Extracellular portion of the chain corresponds to 29-434; the sequence is ESNGVIIIKN…GDDENLINSS (406 aa). N-linked (GlcNAc...) asparagine glycans are attached at residues asparagine 136, asparagine 148, asparagine 210, and asparagine 298. Positions 383-402 are disordered; that stretch reads SSSTTSTTSSSSSSSSSTTT. N-linked (GlcNAc...) asparagine glycosylation is found at asparagine 421 and asparagine 432. The chain crosses the membrane as a helical span at residues 435–455; the sequence is SVIKFSTPIIMIIIILINIKF.

Its subcellular location is the membrane. This is an uncharacterized protein from Dictyostelium discoideum (Social amoeba).